The following is a 246-amino-acid chain: UPF0246 protein stu1967 (246 aa).

The protein belongs to the UPF0246 family.

The sequence is that of UPF0246 protein stu1967 from Streptococcus thermophilus (strain ATCC BAA-250 / LMG 18311).